The following is a 454-amino-acid chain: Septin-10 (454 aa).

Positions 63-329 (QGFCFNILCV…ELYRRCKLEE (267 aa)) constitute a Septin-type G domain. Residues 73 to 80 (GETGIGKS) are G1 motif. Residues 73 to 80 (GETGIGKS), Gly128, 209 to 217 (KADTVSKTE), Gly263, and Arg278 each bind GTP. The tract at residues 125–128 (NTVG) is G3 motif. Residues 208 to 211 (AKAD) form a G4 motif region.

Belongs to the TRAFAC class TrmE-Era-EngA-EngB-Septin-like GTPase superfamily. Septin GTPase family. As to quaternary structure, septins polymerize into heterooligomeric protein complexes that form filaments, and can associate with cellular membranes, actin filaments and microtubules. GTPase activity is required for filament formation. Interacts with ADGB. Proteolytically cleaved in vitro in a calmodulin-dependent manner. Widely expressed. Abundantly expressed in heart and kidney, placenta, skeletal muscles, liver and lung, as well as various tumor cell lines.

It localises to the cytoplasm. The protein resides in the cytoskeleton. It is found in the cell projection. Its subcellular location is the cilium. The protein localises to the flagellum. Its function is as follows. Filament-forming cytoskeletal GTPase. May play a role in cytokinesis (Potential). The chain is Septin-10 from Homo sapiens (Human).